A 471-amino-acid chain; its full sequence is BRISC complex subunit FAM175B (471 aa).

Positions 7–161 (LVTISGAALS…THKFRHVFLR (155 aa)) constitute an MPN domain. The stretch at 245 to 272 (ESDLEVAELEKQVHELKIKIATQQLAKR) forms a coiled coil. The interval 343 to 445 (AEKSRRAGRS…FSDAECPISS (103 aa)) is disordered. Positions 359–370 (NQQQETQNFFTN) are enriched in low complexity.

This sequence belongs to the FAM175 family. Abro1 subfamily. In terms of assembly, component of the BRISC complex, at least composed of FAM175B/ABRO1, BRCC3/BRCC36, BABAM2 and BABAM1/NBA1. Within the complex, interacts directly with BRCC3/BRCC36. The heterodimer with BRCC3/BRCC36 assembles into a heterotetramer. The BRISC complex binds polyubiquitin.

It is found in the cytoplasm. Its subcellular location is the nucleus. The protein resides in the cytoskeleton. The protein localises to the spindle pole. Its function is as follows. Component of the BRISC complex that specifically cleaves 'Lys-63'-linked polyubiquitin, leaving the last ubiquitin chain attached to its substrates. Does not have activity by itself, but the catalytic subunit BRCC3/BRCC36 needs to be associated into a heterotetramer with FAM175B for minimal in vitro activity. May act as a central scaffold protein that assembles the various components of the BRISC complex and retains them in the cytoplasm. Plays a role in regulating the onset of apoptosis via its role in modulating 'Lys-63'-linked ubiquitination of target proteins. Required for normal mitotic spindle assembly and microtubule attachment to kinetochores via its role in deubiquitinating numa1. This is BRISC complex subunit FAM175B from Camponotus floridanus (Florida carpenter ant).